Consider the following 277-residue polypeptide: MTAPIPVVVAGALGRMGAEVIKAVVGAEDCSLVGAIDNTPGKEGADVGLELGLGELEVAVTADFEGCLCAVSQSVRDSGSGAVLVDFTHPSVVYEHTRAAIAYGVHPVIGTTGLSPEQLNDLTEFSAKASVGGAVIPNFSVGMVLLQQAAAAAARFYDHAELTELHHNRKADAPSGTCIKTAELMEELGKSFNPEEVDEHESLAGCRGGQRDSGLRLHSVRLPGLVAHQEVMFGAPGETYTLRHDTIDRSAYMPGVLLTVRKVGNLGSLVYGLERLI.

Residues 11–16 (GALGRM) and 110–112 (GTT) each bind NAD(+). Histidine 166 serves as the catalytic Proton donor/acceptor. Residue histidine 167 participates in (S)-2,3,4,5-tetrahydrodipicolinate binding. The active-site Proton donor is the lysine 170. 176 to 177 (GT) is a (S)-2,3,4,5-tetrahydrodipicolinate binding site.

Belongs to the DapB family.

The protein localises to the cytoplasm. It carries out the reaction (S)-2,3,4,5-tetrahydrodipicolinate + NAD(+) + H2O = (2S,4S)-4-hydroxy-2,3,4,5-tetrahydrodipicolinate + NADH + H(+). It catalyses the reaction (S)-2,3,4,5-tetrahydrodipicolinate + NADP(+) + H2O = (2S,4S)-4-hydroxy-2,3,4,5-tetrahydrodipicolinate + NADPH + H(+). Its pathway is amino-acid biosynthesis; L-lysine biosynthesis via DAP pathway; (S)-tetrahydrodipicolinate from L-aspartate: step 4/4. Functionally, catalyzes the conversion of 4-hydroxy-tetrahydrodipicolinate (HTPA) to tetrahydrodipicolinate. This chain is 4-hydroxy-tetrahydrodipicolinate reductase, found in Synechococcus sp. (strain CC9605).